The chain runs to 453 residues: Pup--protein ligase (453 aa).

Glutamate 9 is a binding site for Mg(2+). Residue arginine 53 coordinates ATP. Tyrosine 55 contributes to the Mg(2+) binding site. Residue aspartate 57 is the Proton acceptor of the active site. Glutamate 63 contributes to the Mg(2+) binding site. The ATP site is built by threonine 66 and tryptophan 420.

It belongs to the Pup ligase/Pup deamidase family. Pup-conjugating enzyme subfamily.

The catalysed reaction is ATP + [prokaryotic ubiquitin-like protein]-L-glutamate + [protein]-L-lysine = ADP + phosphate + N(6)-([prokaryotic ubiquitin-like protein]-gamma-L-glutamyl)-[protein]-L-lysine.. It participates in protein degradation; proteasomal Pup-dependent pathway. Its pathway is protein modification; protein pupylation. In terms of biological role, catalyzes the covalent attachment of the prokaryotic ubiquitin-like protein modifier Pup to the proteasomal substrate proteins, thereby targeting them for proteasomal degradation. This tagging system is termed pupylation. The ligation reaction involves the side-chain carboxylate of the C-terminal glutamate of Pup and the side-chain amino group of a substrate lysine. This chain is Pup--protein ligase, found in Streptomyces coelicolor (strain ATCC BAA-471 / A3(2) / M145).